A 141-amino-acid chain; its full sequence is Large ribosomal subunit protein uL11c (141 aa).

The protein belongs to the universal ribosomal protein uL11 family. In terms of assembly, part of the ribosomal stalk of the 50S ribosomal subunit. Interacts with L10 and the large rRNA to form the base of the stalk. L10 forms an elongated spine to which L12 dimers bind in a sequential fashion forming a multimeric L10(L12)X complex.

It localises to the plastid. It is found in the chloroplast. Forms part of the ribosomal stalk which helps the ribosome interact with GTP-bound translation factors. This chain is Large ribosomal subunit protein uL11c, found in Cyanidium caldarium (Red alga).